The sequence spans 102 residues: Small ribosomal subunit protein uS10 (102 aa).

It belongs to the universal ribosomal protein uS10 family. As to quaternary structure, part of the 30S ribosomal subunit.

In terms of biological role, involved in the binding of tRNA to the ribosomes. This is Small ribosomal subunit protein uS10 from Methylobacillus flagellatus (strain ATCC 51484 / DSM 6875 / VKM B-1610 / KT).